The primary structure comprises 127 residues: Aspartate 1-decarboxylase (127 aa).

Serine 25 (schiff-base intermediate with substrate; via pyruvic acid) is an active-site residue. At serine 25 the chain carries Pyruvic acid (Ser). Threonine 57 contributes to the substrate binding site. Catalysis depends on tyrosine 58, which acts as the Proton donor. 73–75 (GAA) contacts substrate.

Belongs to the PanD family. In terms of assembly, heterooctamer of four alpha and four beta subunits. Pyruvate serves as cofactor. Is synthesized initially as an inactive proenzyme, which is activated by self-cleavage at a specific serine bond to produce a beta-subunit with a hydroxyl group at its C-terminus and an alpha-subunit with a pyruvoyl group at its N-terminus.

It is found in the cytoplasm. The enzyme catalyses L-aspartate + H(+) = beta-alanine + CO2. Its pathway is cofactor biosynthesis; (R)-pantothenate biosynthesis; beta-alanine from L-aspartate: step 1/1. Functionally, catalyzes the pyruvoyl-dependent decarboxylation of aspartate to produce beta-alanine. The sequence is that of Aspartate 1-decarboxylase from Staphylococcus carnosus (strain TM300).